We begin with the raw amino-acid sequence, 409 residues long: Serine protease inhibitor 2 (409 aa).

Positions 1 to 21 (MNKLNFVILCLAALLVFDATA) are cleaved as a signal peptide. Residues N294 and N324 are each glycosylated (N-linked (GlcNAc...) asparagine). The short motif at 356 to 360 (LGSEA) is the Hinge region; required for binding to peptidase element.

The protein belongs to the serpin family. As to quaternary structure, forms a covalent heterodimer with protease CLIPB9; the interaction inhibits CLIPB9 protease activity. Forms a covalent heterodimer with protease CLIPB10; the interaction inhibits CLIPB10 catalytic activity. Interacts with CLIPB4 in the hemolymph of immune-challenged female mosquitoes; the interaction results in CLIPB4 inhibition. Post-translationally, protease CLIPB9 binds to SRPN2 via the hinge region resulting in the cleavage of the reactive bond. This leads to a conformational change in SRPN2 which traps CLIPB9 and distorts its active site, resulting in CLIPB9 inactivation.

The protein resides in the secreted. Its function is as follows. Serine protease inhibitor that functions in the melanization-mediated immune response. By preventing the activation of phenoloxidases through the inhibiting of serine proteases CLIPB9, CLIPB10 and CLIPB4, negatively regulates melanization in the hemolymph. By preventing melanization, has a detrimental role during P.berghei parasite mediated-infection and invasion of the mosquito midgut. In Anopheles gambiae (African malaria mosquito), this protein is Serine protease inhibitor 2.